The primary structure comprises 179 residues: Large ribosomal subunit protein uL5 (179 aa).

The protein belongs to the universal ribosomal protein uL5 family. As to quaternary structure, part of the 50S ribosomal subunit; part of the 5S rRNA/L5/L18/L25 subcomplex. Contacts the 5S rRNA and the P site tRNA. Forms a bridge to the 30S subunit in the 70S ribosome.

In terms of biological role, this is one of the proteins that bind and probably mediate the attachment of the 5S RNA into the large ribosomal subunit, where it forms part of the central protuberance. In the 70S ribosome it contacts protein S13 of the 30S subunit (bridge B1b), connecting the 2 subunits; this bridge is implicated in subunit movement. Contacts the P site tRNA; the 5S rRNA and some of its associated proteins might help stabilize positioning of ribosome-bound tRNAs. This Prochlorococcus marinus (strain NATL1A) protein is Large ribosomal subunit protein uL5.